A 146-amino-acid chain; its full sequence is Hut operon positive regulatory protein (146 aa).

This sequence belongs to the HutP family. As to quaternary structure, homohexamer.

Functionally, antiterminator that binds to cis-acting regulatory sequences on the mRNA in the presence of histidine, thereby suppressing transcription termination and activating the hut operon for histidine utilization. This chain is Hut operon positive regulatory protein, found in Bacillus cereus (strain ZK / E33L).